The sequence spans 336 residues: Phosphate acyltransferase (336 aa).

Belongs to the PlsX family. In terms of assembly, homodimer. Probably interacts with PlsY.

It is found in the cytoplasm. The enzyme catalyses a fatty acyl-[ACP] + phosphate = an acyl phosphate + holo-[ACP]. It participates in lipid metabolism; phospholipid metabolism. In terms of biological role, catalyzes the reversible formation of acyl-phosphate (acyl-PO(4)) from acyl-[acyl-carrier-protein] (acyl-ACP). This enzyme utilizes acyl-ACP as fatty acyl donor, but not acyl-CoA. The polypeptide is Phosphate acyltransferase (Pseudomonas putida (strain GB-1)).